Here is a 309-residue protein sequence, read N- to C-terminus: Ornithine carbamoyltransferase (309 aa).

Residues 56-59 (STRT), glutamine 83, arginine 107, and 134-137 (HPCQ) each bind carbamoyl phosphate. Residues asparagine 165, aspartate 223, and 227-228 (SM) each bind L-ornithine. Carbamoyl phosphate-binding positions include 263–264 (CL) and arginine 291.

It belongs to the aspartate/ornithine carbamoyltransferase superfamily. OTCase family.

The protein resides in the cytoplasm. It catalyses the reaction carbamoyl phosphate + L-ornithine = L-citrulline + phosphate + H(+). It participates in amino-acid biosynthesis; L-arginine biosynthesis; L-arginine from L-ornithine and carbamoyl phosphate: step 1/3. Its function is as follows. Reversibly catalyzes the transfer of the carbamoyl group from carbamoyl phosphate (CP) to the N(epsilon) atom of ornithine (ORN) to produce L-citrulline. The protein is Ornithine carbamoyltransferase of Burkholderia lata (strain ATCC 17760 / DSM 23089 / LMG 22485 / NCIMB 9086 / R18194 / 383).